The following is a 257-amino-acid chain: Ribosomal RNA small subunit methyltransferase J (257 aa).

S-adenosyl-L-methionine-binding positions include 107-108, 123-124, and Asp177; these read RD and ER.

The protein belongs to the methyltransferase superfamily. RsmJ family.

The protein localises to the cytoplasm. The enzyme catalyses guanosine(1516) in 16S rRNA + S-adenosyl-L-methionine = N(2)-methylguanosine(1516) in 16S rRNA + S-adenosyl-L-homocysteine + H(+). Specifically methylates the guanosine in position 1516 of 16S rRNA. The chain is Ribosomal RNA small subunit methyltransferase J from Haemophilus influenzae (strain 86-028NP).